The chain runs to 322 residues: Probable 2-oxoglutarate-dependent dioxygenase AOP1 (322 aa).

Residues 165-271 (TYYLTRLMKY…RYSTGLFSIP (107 aa)) enclose the Fe2OG dioxygenase domain. Fe cation contacts are provided by His195, Asp197, and His252. Arg262 contacts 2-oxoglutarate.

This sequence belongs to the iron/ascorbate-dependent oxidoreductase family. The cofactor is Fe(2+).

Its function is as follows. Probable 2-oxoglutarate-dependent dioxygenase that may be involved in glucosinolates biosynthesis. May play a role in the production of aliphatic glucosinolates. This Arabidopsis thaliana (Mouse-ear cress) protein is Probable 2-oxoglutarate-dependent dioxygenase AOP1 (AOP1).